Consider the following 129-residue polypeptide: Fluoride-specific ion channel FluC (129 aa).

Transmembrane regions (helical) follow at residues 20–40, 67–87, and 96–116; these read WFLG…TLAA, LLII…TAEI, and IMTA…MMLL. Na(+) contacts are provided by G75 and T78.

It belongs to the fluoride channel Fluc/FEX (TC 1.A.43) family.

Its subcellular location is the cell inner membrane. The catalysed reaction is fluoride(in) = fluoride(out). With respect to regulation, na(+) is not transported, but it plays an essential structural role and its presence is essential for fluoride channel function. Fluoride-specific ion channel. Important for reducing fluoride concentration in the cell, thus reducing its toxicity. The chain is Fluoride-specific ion channel FluC from Desulfovibrio desulfuricans (strain ATCC 27774 / DSM 6949 / MB).